A 372-amino-acid polypeptide reads, in one-letter code: Putative glutamate--cysteine ligase 2 (372 aa).

The protein belongs to the glutamate--cysteine ligase type 2 family. YbdK subfamily. Homodimer.

It catalyses the reaction L-cysteine + L-glutamate + ATP = gamma-L-glutamyl-L-cysteine + ADP + phosphate + H(+). Functionally, ATP-dependent carboxylate-amine ligase which exhibits weak glutamate--cysteine ligase activity. This is Putative glutamate--cysteine ligase 2 (ybdK) from Salmonella dublin (strain CT_02021853).